A 496-amino-acid polypeptide reads, in one-letter code: Membrane-bound lytic murein transglycosylase F (496 aa).

An N-terminal signal peptide occupies residues 1–31 (MPIFSTRVLTYLRCIFRLFIGLTLLLTLVGC). Residues 32 to 271 (DFYTPSSQLE…KLDEKYFGHV (240 aa)) are non-LT domain. The LT domain stretch occupies residues 273–496 (NFDFVDTRTF…AEVVKQITLR (224 aa)). Residue Glu-316 is part of the active site. Residues 464–486 (HRREELDDDDSSEPPSAERPTVI) form a disordered region.

The protein in the N-terminal section; belongs to the bacterial solute-binding protein 3 family. In the C-terminal section; belongs to the transglycosylase Slt family.

It localises to the cell outer membrane. The catalysed reaction is Exolytic cleavage of the (1-&gt;4)-beta-glycosidic linkage between N-acetylmuramic acid (MurNAc) and N-acetylglucosamine (GlcNAc) residues in peptidoglycan, from either the reducing or the non-reducing ends of the peptidoglycan chains, with concomitant formation of a 1,6-anhydrobond in the MurNAc residue.. In terms of biological role, murein-degrading enzyme that degrades murein glycan strands and insoluble, high-molecular weight murein sacculi, with the concomitant formation of a 1,6-anhydromuramoyl product. Lytic transglycosylases (LTs) play an integral role in the metabolism of the peptidoglycan (PG) sacculus. Their lytic action creates space within the PG sacculus to allow for its expansion as well as for the insertion of various structures such as secretion systems and flagella. In Aeromonas hydrophila subsp. hydrophila (strain ATCC 7966 / DSM 30187 / BCRC 13018 / CCUG 14551 / JCM 1027 / KCTC 2358 / NCIMB 9240 / NCTC 8049), this protein is Membrane-bound lytic murein transglycosylase F.